Here is a 126-residue protein sequence, read N- to C-terminus: Fluoride-specific ion channel FluC (126 aa).

Transmembrane regions (helical) follow at residues 4–24, 33–53, 67–87, and 97–117; these read PLLSIALGSVLGAWLRWFLGL, IPLGTVTVNLVGGFIIGFAMA, FVITGFCGALTTFSTFSIEIV, and MAMLAISIHLIGSLIFTCLGL. Gly-74 and Thr-77 together coordinate Na(+).

Belongs to the fluoride channel Fluc/FEX (TC 1.A.43) family.

The protein localises to the cell inner membrane. The catalysed reaction is fluoride(in) = fluoride(out). With respect to regulation, na(+) is not transported, but it plays an essential structural role and its presence is essential for fluoride channel function. Fluoride-specific ion channel. Important for reducing fluoride concentration in the cell, thus reducing its toxicity. This chain is Fluoride-specific ion channel FluC, found in Acinetobacter baumannii (strain ATCC 17978 / DSM 105126 / CIP 53.77 / LMG 1025 / NCDC KC755 / 5377).